The following is an 801-amino-acid chain: Elongation factor G, mitochondrial (801 aa).

The N-terminal 65 residues, 1 to 65 (MRVQSLLRAQ…QKIQNQRRWQ (65 aa)), are a transit peptide targeting the mitochondrion. In terms of domain architecture, tr-type G spans 100-387 (SRVRNIGIAA…AVCDYLPNPS (288 aa)). GTP-binding positions include 109 to 116 (AHIDSGKT), 185 to 189 (DTPGH), and 239 to 242 (NKMD).

The protein belongs to the TRAFAC class translation factor GTPase superfamily. Classic translation factor GTPase family. EF-G/EF-2 subfamily.

It localises to the mitochondrion. The protein operates within protein biosynthesis; polypeptide chain elongation. Functionally, mitochondrial GTPase that catalyzes the GTP-dependent ribosomal translocation step during translation elongation. During this step, the ribosome changes from the pre-translocational (PRE) to the post-translocational (POST) state as the newly formed A-site-bound peptidyl-tRNA and P-site-bound deacylated tRNA move to the P and E sites, respectively. Catalyzes the coordinated movement of the two tRNA molecules, the mRNA and conformational changes in the ribosome. The chain is Elongation factor G, mitochondrial (mef1) from Pyrenophora tritici-repentis (strain Pt-1C-BFP) (Wheat tan spot fungus).